The chain runs to 372 residues: Cyanuric acid amidohydrolase (372 aa).

The interval 1–105 (MPTTLRRAHV…IVFEAREVDE (105 aa)) is RU A. Substrate-binding positions include arginine 56 and 84-85 (SG). The interval 115–252 (SLALGRARTP…HEIMVAGMSR (138 aa)) is RU B. Lysine 165 is an active-site residue. Substrate contacts are provided by residues arginine 197 and 235-236 (SG). The active-site Nucleophile is the serine 235. The RU C stretch occupies residues 258-372 (LAIDHGVMRD…GPVAIIVERT (115 aa)). Mg(2+) is bound at residue glutamate 305. Substrate contacts are provided by residues arginine 332 and 351 to 352 (SG). The Mg(2+) site is built by alanine 354, glutamine 357, glycine 358, proline 359, and glycine 362.

It belongs to the cyclic amide hydrolase (CyAH) family. Homotetramer.

It carries out the reaction cyanurate + H2O = 1-carboxybiuret + H(+). The protein operates within xenobiotic degradation; atrazine degradation; biuret from cyanurate: step 1/1. Its activity is regulated as follows. Inhibited by barbituric acid. Responsible for the hydrolysis of cyanuric acid, an intermediate formed during catabolism of s-triazine based compounds in herbicides such as atrazine and polymers such as melamine. Catalyzes the hydrolytic opening of the s-triazine ring of cyanuric acid (2,4,6-trihydroxy-s-triazine) to yield carbon dioxide and carboxybiuret, which spontaneously decarboxylates to biuret. This Bradyrhizobium sp. (strain ORS 375) protein is Cyanuric acid amidohydrolase.